The following is a 148-amino-acid chain: Dermatopontin (148 aa).

Cys14 and Cys40 are disulfide-bonded. Asn44 carries N-linked (GlcNAc...) asparagine glycosylation. Disulfide bonds link Cys66-Cys93 and Cys103-Cys147.

This sequence belongs to the dermatopontin family. The terminal mannose residues of the polysaccharide are 3-O-methylated. No tyrosine sulfation was detected.

It is found in the secreted. It localises to the extracellular space. The protein resides in the extracellular matrix. Functionally, seems to mediate adhesion by cell surface integrin binding. The protein is Dermatopontin of Biomphalaria glabrata (Bloodfluke planorb).